The following is a 574-amino-acid chain: Putative ABC transporter ATP-binding protein VVA0347 (574 aa).

2 consecutive ABC transporter domains span residues 3-244 and 299-533; these read IEFS…GIRE and LDVR…ANLT. ATP contacts are provided by residues 37-44 and 332-339; these read GPSGSGKS and GKNGSGKS.

It belongs to the ABC transporter superfamily.

The protein resides in the cell inner membrane. Its function is as follows. Probably part of an ABC transporter complex. Responsible for energy coupling to the transport system. The sequence is that of Putative ABC transporter ATP-binding protein VVA0347 from Vibrio vulnificus (strain YJ016).